The sequence spans 789 residues: UPF0313 protein VC_1711 (789 aa).

One can recognise a Radical SAM core domain in the interval 363–642 (AYDMIKTSVN…KALLRYHDPA (280 aa)). Residues C377, C381, and C384 each coordinate [4Fe-4S] cluster. The disordered stretch occupies residues 669-789 (PEKDSDLVTP…NTQRQPQRAR (121 aa)). The segment covering 683–698 (KSGRHGANRFATKHTH) has biased composition (basic residues). 3 stretches are compositionally biased toward polar residues: residues 716–726 (RPNSGNKSNQG), 733–763 (PTGS…QRGS), and 778–789 (RGNTQRQPQRAR).

The protein belongs to the UPF0313 family. [4Fe-4S] cluster is required as a cofactor.

In Vibrio cholerae serotype O1 (strain ATCC 39315 / El Tor Inaba N16961), this protein is UPF0313 protein VC_1711.